The chain runs to 297 residues: MLEYAIEDFFHFLRIERGLSDNTLSSYKRDLTNYLQYMKDHDKTATWDKISRTDIMGFLYMLKDQGKSTATISRHISSIRSFHQFLIREQITSNDPSLHIETPKKDRKLPDILSQDEVDRLLEIKMNTKLSVRNKAMLELLYATGLRVSELISLNVSDLHLMMGFVQCFGKGSKERIVPLGDTAKHYLEKYISEARDSLIKKNNREDALFVNQHGRRLTRQGFWKILKGLTLEAGILKTITPHTLRHSFATHLLENGADLRLVQEMLGHADISTTQVYTHVTKARLKDMYQSYHPRA.

In terms of domain architecture, Core-binding (CB) spans 1–87; that stretch reads MLEYAIEDFF…SIRSFHQFLI (87 aa). One can recognise a Tyr recombinase domain in the interval 108–291; the sequence is KLPDILSQDE…TKARLKDMYQ (184 aa). Residues Arg-147, Lys-171, His-243, Arg-246, and His-269 contribute to the active site. Tyr-278 serves as the catalytic O-(3'-phospho-DNA)-tyrosine intermediate.

It belongs to the 'phage' integrase family. XerD subfamily. As to quaternary structure, forms a cyclic heterotetrameric complex composed of two molecules of XerC and two molecules of XerD.

The protein resides in the cytoplasm. Its function is as follows. Site-specific tyrosine recombinase, which acts by catalyzing the cutting and rejoining of the recombining DNA molecules. The XerC-XerD complex is essential to convert dimers of the bacterial chromosome into monomers to permit their segregation at cell division. It also contributes to the segregational stability of plasmids. The chain is Tyrosine recombinase XerD from Oceanobacillus iheyensis (strain DSM 14371 / CIP 107618 / JCM 11309 / KCTC 3954 / HTE831).